A 243-amino-acid polypeptide reads, in one-letter code: Proteasome subunit alpha (243 aa).

The protein belongs to the peptidase T1A family. The 20S proteasome core is composed of 14 alpha and 14 beta subunits that assemble into four stacked heptameric rings, resulting in a barrel-shaped structure. The two inner rings, each composed of seven catalytic beta subunits, are sandwiched by two outer rings, each composed of seven alpha subunits. The catalytic chamber with the active sites is on the inside of the barrel. Has a gated structure, the ends of the cylinder being occluded by the N-termini of the alpha-subunits. Is capped at one or both ends by the proteasome regulatory ATPase, PAN.

It is found in the cytoplasm. The formation of the proteasomal ATPase PAN-20S proteasome complex, via the docking of the C-termini of PAN into the intersubunit pockets in the alpha-rings, triggers opening of the gate for substrate entry. Interconversion between the open-gate and close-gate conformations leads to a dynamic regulation of the 20S proteasome proteolysis activity. Component of the proteasome core, a large protease complex with broad specificity involved in protein degradation. The protein is Proteasome subunit alpha of Pyrobaculum aerophilum (strain ATCC 51768 / DSM 7523 / JCM 9630 / CIP 104966 / NBRC 100827 / IM2).